The primary structure comprises 164 residues: Galectin-3 (164 aa).

Residues 9 to 154 (STVDLSEPLK…FSDVLGVTVL (146 aa)) enclose the Galectin domain. H60, R64, N73, and E84 together coordinate a carbohydrate.

Homotetramer. Oligomerization is required for carbohydrate binding.

The protein resides in the secreted. The protein localises to the extracellular space. It localises to the extracellular matrix. Its subcellular location is the cell wall. Binds lactose. May play a role in fruiting body formation. This chain is Galectin-3 (Cgl3), found in Coprinopsis cinerea (strain Okayama-7 / 130 / ATCC MYA-4618 / FGSC 9003) (Inky cap fungus).